Here is a 394-residue protein sequence, read N- to C-terminus: Trans-enoyl reductase fumoC (394 aa).

62–65 (VDGK) is a binding site for NADP(+). Substrate is bound at residue 152–159 (ASLASVGM). NADP(+) contacts are provided by residues 224 to 227 (SSSS), Y242, and 289 to 290 (LD). Position 309–313 (309–313 (TLTQF)) interacts with substrate. 378–379 (VK) lines the NADP(+) pocket.

This sequence belongs to the zinc-containing alcohol dehydrogenase family. As to quaternary structure, monomer.

It participates in secondary metabolite biosynthesis. In terms of biological role, trans-enoyl reductase; part of the gene cluster that mediates the biosynthesis of fumosorinone, a 2-pyridone alkaloid that acts as an inhibitor of protein tyrosine phosphatase 1B which is implicated asa negative regulator of insulin receptor signaling and a potential drug target for the treatment of type II diabetes and other associated metabolic syndromes. The polyketide-amino acid backbone of fumosorinone is first assembled by the PKS-NRPS hybrid fumoS. The PKS modules condense one acetyl-CoA starter unit with 7 malonyl-CoA units, programmed C-methylations occurring after the first 3 and the sixth extensions, and cycles of full reduction occurring after the first 2 extensions. Because fumoS lacks a designated enoyl reductase (ER) domain, the required activity is provided the enoyl reductase fumoC. Upon formation of the polyketide backbone on the thiotemplate, the polyketide is transferred to the NRPS module and linked to tyrosine to produce the acyltetramic acid intermediate called prefumosorinone A. The cytochrome P450 monooxygenase fumoA then probably catalyzes an unprecedented oxidative ring expansion of prefumosorinone A to form prefumosorinone B which contains the 2-pyridone core of fumosorinone. The cytochrome P450 monooxygenase fumoB might hydroxylate the nitrogen of prefumosorinone B, but not the acyltetramic acid prefumosorinone A, to form fumosorinone. The sequence is that of Trans-enoyl reductase fumoC from Cordyceps fumosorosea (strain ARSEF 2679) (Isaria fumosorosea).